Consider the following 303-residue polypeptide: Bifunctional protein FolD (303 aa).

NADP(+)-binding positions include 165–167, Ser190, and Ile231; that span reads GRS.

The protein belongs to the tetrahydrofolate dehydrogenase/cyclohydrolase family. In terms of assembly, homodimer.

It carries out the reaction (6R)-5,10-methylene-5,6,7,8-tetrahydrofolate + NADP(+) = (6R)-5,10-methenyltetrahydrofolate + NADPH. The enzyme catalyses (6R)-5,10-methenyltetrahydrofolate + H2O = (6R)-10-formyltetrahydrofolate + H(+). It participates in one-carbon metabolism; tetrahydrofolate interconversion. Catalyzes the oxidation of 5,10-methylenetetrahydrofolate to 5,10-methenyltetrahydrofolate and then the hydrolysis of 5,10-methenyltetrahydrofolate to 10-formyltetrahydrofolate. This chain is Bifunctional protein FolD, found in Prochlorococcus marinus (strain NATL2A).